The chain runs to 907 residues: Protein translocase subunit SecA (907 aa).

Residues Gln-87, 105–109 (GEGKT), and Asp-513 each bind ATP. The segment covering 841 to 853 (EAQRRAQAEEAAR) has biased composition (basic and acidic residues). Residues 841–907 (EAQRRAQAEE…KYKQCHGQIN (67 aa)) form a disordered region. Residues 854–865 (RAQAQHASAQSQ) are compositionally biased toward low complexity. A compositionally biased stretch (basic and acidic residues) spans 872-887 (EGHHQPVVRDERKVGR). Zn(2+) is bound by residues Cys-891, Cys-893, Cys-902, and His-903.

Belongs to the SecA family. In terms of assembly, monomer and homodimer. Part of the essential Sec protein translocation apparatus which comprises SecA, SecYEG and auxiliary proteins SecDF-YajC and YidC. Requires Zn(2+) as cofactor.

It is found in the cell inner membrane. The protein resides in the cytoplasm. It carries out the reaction ATP + H2O + cellular proteinSide 1 = ADP + phosphate + cellular proteinSide 2.. In terms of biological role, part of the Sec protein translocase complex. Interacts with the SecYEG preprotein conducting channel. Has a central role in coupling the hydrolysis of ATP to the transfer of proteins into and across the cell membrane, serving both as a receptor for the preprotein-SecB complex and as an ATP-driven molecular motor driving the stepwise translocation of polypeptide chains across the membrane. The protein is Protein translocase subunit SecA of Vibrio vulnificus (strain YJ016).